The sequence spans 592 residues: MAEETTPRDPFSVTIRTIRTSIRDAISSVYEVDELIEVPIDENPPVEGADLATPVALSLAKELDENPRELAETIVEESDLDDVVFVEKAWVEGPGFINLKLDRSQYAALTLRSIFYYGEEYGSLDLGMGRPVILEHTSANPNGPLHIGHGRNAVIGDILARCMVFTNYGVEVQYYVNDMGKQIAMLAWKYIKEGRPEVPEGEKPDEFFGKLYTEAAREIEEDPELEEVVERFLRSYERYLVEEESRAERIADAFQTVVEECLRGHIQTLERLRVAHDRFVYESEFARDALEIVEKLLDMGVAEEREDGAVVVDLEDYGIDKELVLTRSDGTTLYTTRDIAYHLWKLGRATFVVDVLGADHKLAVEQLRAVLDMLEENPDRIDVVFYEFIHLPEGSMSTRKGRYVTLDEFLEEAKKRALEKMKAAGVAEELSDEEREKIAEEIAIGAVRFAIARVSPNKPIEFDWDEALDFRRGGPFIQYAYARAKSILRKADEEVNRFDAAYLNDDHSFELILKMSKFPRHVAQCVRKRRPDILAEYAYDLAKTFHTFYEEVPVLHVEDDEVREARLKLVEAFTIVAENLMNLLGIPTLERM.

The 'HIGH' region signature appears at 139–149 (ANPNGPLHIGH).

It belongs to the class-I aminoacyl-tRNA synthetase family.

Its subcellular location is the cytoplasm. The catalysed reaction is tRNA(Arg) + L-arginine + ATP = L-arginyl-tRNA(Arg) + AMP + diphosphate. This chain is Arginine--tRNA ligase, found in Methanopyrus kandleri (strain AV19 / DSM 6324 / JCM 9639 / NBRC 100938).